A 457-amino-acid chain; its full sequence is tRNA (guanine(37)-N(1))-methyltransferase (457 aa).

S-adenosyl-L-methionine is bound by residues His225, 263-264, 291-292, and Asn358; these read DL and DG.

Belongs to the class I-like SAM-binding methyltransferase superfamily. TRM5/TYW2 family. Monomer.

It localises to the mitochondrion matrix. The protein localises to the nucleus. The protein resides in the cytoplasm. It catalyses the reaction guanosine(37) in tRNA + S-adenosyl-L-methionine = N(1)-methylguanosine(37) in tRNA + S-adenosyl-L-homocysteine + H(+). In terms of biological role, specifically methylates the N1 position of guanosine-37 in various cytoplasmic and mitochondrial tRNAs. Methylation is not dependent on the nature of the nucleoside 5' of the target nucleoside. This is the first step in the biosynthesis of wybutosine (yW), a modified base adjacent to the anticodon of tRNAs and required for accurate decoding. The protein is tRNA (guanine(37)-N(1))-methyltransferase of Coprinopsis cinerea (strain Okayama-7 / 130 / ATCC MYA-4618 / FGSC 9003) (Inky cap fungus).